The following is a 62-amino-acid chain: MALDGSSGGGSNVETLLIVAIVVVIMAIMLYYFWWMPRQQQKKCSKAEECTCTNGSCSLKTS.

Residues 16-36 (LLIVAIVVVIMAIMLYYFWWM) traverse the membrane as a helical segment.

This sequence belongs to the asfivirus inner membrane protein p12 family. In terms of assembly, homomultimer; disulfide-linked. Not glycosylated.

It localises to the virion membrane. The chain is Inner membrane protein p12 from African swine fever virus (isolate Pig/Kenya/KEN-50/1950) (ASFV).